The chain runs to 968 residues: Serine/threonine-protein kinase apg-1 (968 aa).

Positions phenylalanine 24–valine 329 constitute a Protein kinase domain. ATP-binding positions include isoleucine 30–valine 38 and lysine 53. Residue aspartate 167 is the Proton acceptor of the active site. Disordered stretches follow at residues proline 334–alanine 500, methionine 528–serine 585, leucine 884–glutamate 906, and alanine 939–alanine 968. Composition is skewed to basic and acidic residues over residues leucine 350–aspartate 361, leucine 371–glycine 380, and proline 417–alanine 431. Polar residues-rich tracts occupy residues valine 441–serine 452, methionine 528–serine 538, and alanine 545–alanine 557.

It belongs to the protein kinase superfamily. Ser/Thr protein kinase family. APG1/unc-51/ULK1 subfamily. Homodimer. Forms a ternary complex with ATG13 and ATG17.

The protein resides in the cytoplasm. The protein localises to the preautophagosomal structure membrane. The catalysed reaction is L-seryl-[protein] + ATP = O-phospho-L-seryl-[protein] + ADP + H(+). It catalyses the reaction L-threonyl-[protein] + ATP = O-phospho-L-threonyl-[protein] + ADP + H(+). In terms of biological role, serine/threonine protein kinase involved in the cytoplasm to vacuole transport (Cvt) and found to be essential in autophagy, where it is required for the formation of autophagosomes. Involved in the clearance of protein aggregates which cannot be efficiently cleared by the proteasome. Required for selective autophagic degradation of the nucleus (nucleophagy) as well as for mitophagy which contributes to regulate mitochondrial quantity and quality by eliminating the mitochondria to a basal level to fulfill cellular energy requirements and preventing excess ROS production. Also involved in endoplasmic reticulum-specific autophagic process, in selective removal of ER-associated degradation (ERAD) substrates. Plays a key role in ATG9 and ATG23 cycling through the pre-autophagosomal structure and is necessary to promote ATG18 binding to ATG9 through phosphorylation of ATG9. Catalyzes phosphorylation of ATG4, decreasing the interaction between ATG4 and ATG8 and impairing deconjugation of PE-conjugated forms of ATG8. The chain is Serine/threonine-protein kinase apg-1 from Neurospora crassa (strain ATCC 24698 / 74-OR23-1A / CBS 708.71 / DSM 1257 / FGSC 987).